We begin with the raw amino-acid sequence, 339 residues long: MKPNNPPRIAVLLVNLGTPDEPTAPAVRRYLKQFLSDPRVIEIPQFLWAIILNLFVLPTRPKRVAEAYASVWEGDSPIRKILNQQVDKLHARLEGSMGPFNISVHPAMSYGNPGLPDVMDKLCAEGVEHFVILPLFPQYSATSGGAVYDALTKWSLKQRNLPSYTIVKDYFAHPLYIKALADSIRRFQAVHGKPDKLMFSFHGIPQPYADKGDPYPKRCKCTAAQVAQELGLSQDEWIISFQSRFGKQEWVKPYTDVTLEQWGKAGVRSVQVVSPAFSADCLETLEELAMENRDNFINAGGQEYHYIPALNDDEAHIDLMEALAKPLVAGWASTLEGWT.

2 residues coordinate Fe cation: H202 and E283.

The protein belongs to the ferrochelatase family.

It localises to the cytoplasm. It catalyses the reaction heme b + 2 H(+) = protoporphyrin IX + Fe(2+). The protein operates within porphyrin-containing compound metabolism; protoheme biosynthesis; protoheme from protoporphyrin-IX: step 1/1. Catalyzes the ferrous insertion into protoporphyrin IX. This is Ferrochelatase from Psychrobacter sp. (strain PRwf-1).